The following is a 396-amino-acid chain: MAHPQSPGEFQILAAEGPTAGAAWTRHSNDAYPKYSALSKTHWEMWMLEGIEQTGNAGVTVTFFIDGSQTFHGNDPLHITFHALLPDGAIEKHHLIAAAVRVRETDASIVLEWPSKENGDGTEANSFSRIEVAQDHSSATATFNVPGAVQGSLALTSYTRSPDPTAGALGPAVSHRQIMTGAHAESDLSFPGSGRRLRFAGKGGHDRCWMEAAFPAILSDTTYVRGHAGPYTFASLGVVSRMGESRGRNCQKFRLLRDGVEVFASKSDTVSLTEDYFVLRSSHGGPVKGPFLDTTTGYRLDFVRPRAGKHWAFEIAHEKVWWSMPLGPPPLVREGNSGFVSKVRGGEVGGDADGETFEGAGDIGQIQMPELSTLVELKTLKAKAAAAATAPAPAEQ.

Belongs to the Diels-Alderase family.

It functions in the pathway secondary metabolite biosynthesis. Diels-Alderase; part of the gene cluster that mediates the biosynthesis of macrophasetins, 3-decalinoyltetramic acids (DTAs) which feature a tetramate (pyrrolidine-2,4-dione) unit connected to a decalin fragment and that have potent bioactivities. The PKS-NRPS mpsA together with its associated enoylreductase partner mpsG incorporate one unit of acetyl-CoA, seven units of malonyl-CoA, and one unit of L-alanine to assemble the linear tetramic acid intermediate corresponding to the backbone of macrophasetins. Without the Diels-Alderase mpsD, the mpsA/G product can undergo the non-enzymatic intramolecular Diels-Alder (IMDA) reaction to generate both macrophasetin A and macrophasetin B. Catalyzed by mpsD, the linear tetramic acid intermediate is thoroughly converted to macrophasetin A via the endo-IMDA reaction in a regioselective and stereoselective manner. Finally, the cytochrome P450 monooxygenase mpsF catalyzes the hydroxylation at C20 to yield the end product macrophasetin C. This Macrophomina phaseolina (strain MS6) (Charcoal rot fungus) protein is Diels-Alderase mpsD.